The sequence spans 336 residues: D-erythrose-4-phosphate dehydrogenase (336 aa).

11–12 (RI) contributes to the NAD(+) binding site. Residues 153-155 (SCT), arginine 199, 212-213 (TK), and arginine 235 contribute to the substrate site. The active-site Nucleophile is cysteine 154. Asparagine 317 is a binding site for NAD(+).

It belongs to the glyceraldehyde-3-phosphate dehydrogenase family. Epd subfamily. In terms of assembly, homotetramer.

The protein localises to the cytoplasm. It carries out the reaction D-erythrose 4-phosphate + NAD(+) + H2O = 4-phospho-D-erythronate + NADH + 2 H(+). It functions in the pathway cofactor biosynthesis; pyridoxine 5'-phosphate biosynthesis; pyridoxine 5'-phosphate from D-erythrose 4-phosphate: step 1/5. Functionally, catalyzes the NAD-dependent conversion of D-erythrose 4-phosphate to 4-phosphoerythronate. This Aeromonas salmonicida (strain A449) protein is D-erythrose-4-phosphate dehydrogenase.